Reading from the N-terminus, the 353-residue chain is Photosystem II protein D1 (353 aa).

At threonine 2 the chain carries N-acetylthreonine. At threonine 2 the chain carries Phosphothreonine. 3 helical membrane passes run 29-46 (YIGWFGVLMIPTLLTATS), 118-133 (HFLLGVACYMGREWEL), and 142-156 (WIAVAYSAPVAAATA). Position 118 (histidine 118) interacts with chlorophyll a. Tyrosine 126 contacts pheophytin a. The [CaMn4O5] cluster site is built by aspartate 170 and glutamate 189. A helical membrane pass occupies residues 197–218 (FHMLGVAGVFGGSLFSAMHGSL). Chlorophyll a is bound at residue histidine 198. A quinone-binding positions include histidine 215 and 264 to 265 (SF). Histidine 215 is a binding site for Fe cation. Histidine 272 contributes to the Fe cation binding site. The chain crosses the membrane as a helical span at residues 274 to 288 (FLAAWPVVGIWFTAL). [CaMn4O5] cluster contacts are provided by histidine 332, glutamate 333, aspartate 342, and alanine 344. Residues 345–353 (ALEVPSLNG) constitute a propeptide that is removed on maturation.

The protein belongs to the reaction center PufL/M/PsbA/D family. As to quaternary structure, PSII is composed of 1 copy each of membrane proteins PsbA, PsbB, PsbC, PsbD, PsbE, PsbF, PsbH, PsbI, PsbJ, PsbK, PsbL, PsbM, PsbT, PsbX, PsbY, PsbZ, Psb30/Ycf12, at least 3 peripheral proteins of the oxygen-evolving complex and a large number of cofactors. It forms dimeric complexes. Requires The D1/D2 heterodimer binds P680, chlorophylls that are the primary electron donor of PSII, and subsequent electron acceptors. It shares a non-heme iron and each subunit binds pheophytin, quinone, additional chlorophylls, carotenoids and lipids. D1 provides most of the ligands for the Mn4-Ca-O5 cluster of the oxygen-evolving complex (OEC). There is also a Cl(-1) ion associated with D1 and D2, which is required for oxygen evolution. The PSII complex binds additional chlorophylls, carotenoids and specific lipids. as cofactor. Post-translationally, tyr-161 forms a radical intermediate that is referred to as redox-active TyrZ, YZ or Y-Z. In terms of processing, C-terminally processed by CTPA; processing is essential to allow assembly of the oxygen-evolving complex and thus photosynthetic growth.

Its subcellular location is the plastid. The protein localises to the chloroplast thylakoid membrane. The catalysed reaction is 2 a plastoquinone + 4 hnu + 2 H2O = 2 a plastoquinol + O2. Functionally, photosystem II (PSII) is a light-driven water:plastoquinone oxidoreductase that uses light energy to abstract electrons from H(2)O, generating O(2) and a proton gradient subsequently used for ATP formation. It consists of a core antenna complex that captures photons, and an electron transfer chain that converts photonic excitation into a charge separation. The D1/D2 (PsbA/PsbD) reaction center heterodimer binds P680, the primary electron donor of PSII as well as several subsequent electron acceptors. In Oryza nivara (Indian wild rice), this protein is Photosystem II protein D1.